A 91-amino-acid polypeptide reads, in one-letter code: Small ribosomal subunit protein uS19 (91 aa).

It belongs to the universal ribosomal protein uS19 family.

Protein S19 forms a complex with S13 that binds strongly to the 16S ribosomal RNA. The sequence is that of Small ribosomal subunit protein uS19 from Methylacidiphilum infernorum (isolate V4) (Methylokorus infernorum (strain V4)).